The sequence spans 271 residues: Solute carrier family 66 member 2 (271 aa).

Transmembrane regions (helical) follow at residues 7–27 (GWLL…AMVF), 49–69 (FSTH…LFWF), and 72–92 (HFES…LLML). The region spanning 14–80 (HQLVSWVAAG…RHFESPLLWQ (67 aa)) is the PQ-loop 1 domain. Ser-110 carries the phosphoserine modification. A run of 3 helical transmembrane segments spans residues 145–165 (DYVQ…YLSI), 168–188 (ALFV…LGVP), and 232–252 (VCGL…YAFA). The region spanning 178–233 (AVLTEAMLGVPQLYRNYCHRSTEGMSLKMVLMWTSGDTFKTAYFLLNGAPLQFSVC) is the PQ-loop 2 domain.

It localises to the membrane. The protein is Solute carrier family 66 member 2 (Slc66a2) of Mus musculus (Mouse).